The primary structure comprises 504 residues: ATP synthase subunit alpha (504 aa).

169-176 (GDRQIGKT) serves as a coordination point for ATP.

Belongs to the ATPase alpha/beta chains family. F-type ATPases have 2 components, CF(1) - the catalytic core - and CF(0) - the membrane proton channel. CF(1) has five subunits: alpha(3), beta(3), gamma(1), delta(1), epsilon(1). CF(0) has three main subunits: a(1), b(2) and c(9-12). The alpha and beta chains form an alternating ring which encloses part of the gamma chain. CF(1) is attached to CF(0) by a central stalk formed by the gamma and epsilon chains, while a peripheral stalk is formed by the delta and b chains.

It is found in the cell membrane. It carries out the reaction ATP + H2O + 4 H(+)(in) = ADP + phosphate + 5 H(+)(out). Produces ATP from ADP in the presence of a proton gradient across the membrane. The alpha chain is a regulatory subunit. The protein is ATP synthase subunit alpha of Syntrophomonas wolfei subsp. wolfei (strain DSM 2245B / Goettingen).